Consider the following 86-residue polypeptide: UPF0335 protein BR1752/BS1330_I1746 (86 aa).

It belongs to the UPF0335 family.

This is UPF0335 protein BR1752/BS1330_I1746 from Brucella suis biovar 1 (strain 1330).